The sequence spans 277 residues: uncharacterized protein (277 aa).

A run of 7 helical transmembrane segments spans residues 23-43 (CIGG…TAFI), 61-81 (FLIY…IIGG), 117-137 (LVLL…FGIF), 144-164 (IIGA…VISL), 197-217 (YIIL…IVVL), 221-241 (IIDI…IIYI), and 243-263 (IKGI…VFSI).

To M.jannaschii MJ1189.

The protein localises to the cell membrane. This is an uncharacterized protein from Methanocaldococcus jannaschii (strain ATCC 43067 / DSM 2661 / JAL-1 / JCM 10045 / NBRC 100440) (Methanococcus jannaschii).